Consider the following 776-residue polypeptide: 5-methyltetrahydropteroyltriglutamate--homocysteine methyltransferase (776 aa).

5-methyltetrahydropteroyltri-L-glutamate-binding positions include 16–19 and Lys112; that span reads RELK. L-homocysteine contacts are provided by residues 435 to 437 and Glu488; that span reads IGS. Residues 435-437 and Glu488 contribute to the L-methionine site; that span reads IGS. Residues 519-520 and Trp565 each bind 5-methyltetrahydropteroyltri-L-glutamate; that span reads RC. Asp603 is an L-homocysteine binding site. An L-methionine-binding site is contributed by Asp603. Residue Glu609 participates in 5-methyltetrahydropteroyltri-L-glutamate binding. The Zn(2+) site is built by His645, Cys647, and Glu669. The Proton donor role is filled by His698. Zn(2+) is bound at residue Cys730.

The protein belongs to the vitamin-B12 independent methionine synthase family. Requires Zn(2+) as cofactor.

It carries out the reaction 5-methyltetrahydropteroyltri-L-glutamate + L-homocysteine = tetrahydropteroyltri-L-glutamate + L-methionine. The protein operates within amino-acid biosynthesis; L-methionine biosynthesis via de novo pathway; L-methionine from L-homocysteine (MetE route): step 1/1. In terms of biological role, catalyzes the transfer of a methyl group from 5-methyltetrahydrofolate to homocysteine resulting in methionine formation. The protein is 5-methyltetrahydropteroyltriglutamate--homocysteine methyltransferase of Ralstonia pickettii (strain 12J).